Here is a 333-residue protein sequence, read N- to C-terminus: Beta-ketoacyl-[acyl-carrier-protein] synthase III (333 aa).

Active-site residues include Cys-116 and His-258. The interval 259 to 263 is ACP-binding; that stretch reads QANQR. Residue Asn-288 is part of the active site.

Belongs to the thiolase-like superfamily. FabH family. As to quaternary structure, homodimer.

It is found in the cytoplasm. It carries out the reaction malonyl-[ACP] + acetyl-CoA + H(+) = 3-oxobutanoyl-[ACP] + CO2 + CoA. It participates in lipid metabolism; fatty acid biosynthesis. Functionally, catalyzes the condensation reaction of fatty acid synthesis by the addition to an acyl acceptor of two carbons from malonyl-ACP. Catalyzes the first condensation reaction which initiates fatty acid synthesis and may therefore play a role in governing the total rate of fatty acid production. Possesses both acetoacetyl-ACP synthase and acetyl transacylase activities. Its substrate specificity determines the biosynthesis of branched-chain and/or straight-chain of fatty acids. This Microcystis aeruginosa (strain NIES-843 / IAM M-2473) protein is Beta-ketoacyl-[acyl-carrier-protein] synthase III.